The sequence spans 251 residues: MLGACLRLLVGALCTVCSLGTARAYSDTSPLLGSNWGSLTHLYTATARNSYHLQIHRDGHVDGTPHQTIYSALMITSEDAGSVVIIGAMTRRFLCMDLRGNIFGSYHFSPENCRFRQWTLENGYDVYLSPKHHYLVSLGRSKRIFQPGTNPPPFSQFLARRNEVPLLHFYTARPRRHTRSAEDPPERDPLNVLKPRPRATPIPVSCSRELPSAEEGGPAASDPLGVLRRGRGDARRGAGGTDRCRPFPRFV.

The N-terminal stretch at 1–24 (MLGACLRLLVGALCTVCSLGTARA) is a signal peptide. Cys-95 and Cys-113 are disulfide-bonded. Residues Thr-171 and Thr-178 are each glycosylated (O-linked (GalNAc) threonine). Residues 175–251 (RRHTRSAEDP…DRCRPFPRFV (77 aa)) are disordered. Over residues 179-189 (RSAEDPPERDP) the composition is skewed to basic and acidic residues. A Phosphoserine; by FAM20C modification is found at Ser-180.

It belongs to the heparin-binding growth factors family. Interacts with FGFR1, FGFR2, FGFR3 and FGFR4. Affinity between fibroblast growth factors (FGFs) and their receptors is increased by KL and heparan sulfate glycosaminoglycans that function as coreceptors. Post-translationally, following secretion this protein is inactivated by cleavage into a N-terminal fragment and a C-terminal fragment. The processing is effected by proprotein convertases. In terms of processing, O-glycosylated at Thr-171 and Thr-178 by GALNT3 and glycosylation of Thr-178 requires previous glycosylation at Thr171. Glycosylation is necessary for secretion; it blocks processing by proprotein convertases when the O-glycan is alpha 2,6-sialylated. Competition between proprotein convertase cleavage and block of cleavage by O-glycosylation determines the level of secreted active FGF23. Phosphorylation at Ser-180 mediated by FAM20C slows down glycosylation at Thr-178 notably. As to expression, expressed in the parathyroid.

The protein resides in the secreted. Its function is as follows. Regulator of phosphate homeostasis. Inhibits renal tubular phosphate transport by reducing SLC34A1 levels. Regulator of vitamin-D metabolism. Negatively regulates osteoblasts differentiation and matrix mineralization. Acts directly on the parathyroid to decrease PTH secretion. Up-regulates EGR1 expression in the presence of KL. This Rattus norvegicus (Rat) protein is Fibroblast growth factor 23 (Fgf23).